The following is a 187-amino-acid chain: Auxin-binding protein T85 (187 aa).

Residues 1–20 (MARHVLVVVAVLLFATAEAS) form the signal peptide. C22 and C177 are oxidised to a cystine. 3 residues coordinate Zn(2+): H78, H80, and E84. An N-linked (GlcNAc...) asparagine glycan is attached at N117. H128 contacts Zn(2+). The Prevents secretion from ER motif lies at 184-187 (KDEL).

Homodimer.

Its subcellular location is the endoplasmic reticulum lumen. Its function is as follows. This is probably a receptor for the plant hormone auxin. This chain is Auxin-binding protein T85 (T85), found in Nicotiana tabacum (Common tobacco).